The sequence spans 358 residues: DNA replication and repair protein RecF (358 aa).

ATP is bound at residue glycine 30–threonine 37.

This sequence belongs to the RecF family.

It localises to the cytoplasm. Its function is as follows. The RecF protein is involved in DNA metabolism; it is required for DNA replication and normal SOS inducibility. RecF binds preferentially to single-stranded, linear DNA. It also seems to bind ATP. This chain is DNA replication and repair protein RecF, found in Actinobacillus succinogenes (strain ATCC 55618 / DSM 22257 / CCUG 43843 / 130Z).